The sequence spans 185 residues: Elongation factor P (185 aa).

The protein belongs to the elongation factor P family.

It localises to the cytoplasm. It functions in the pathway protein biosynthesis; polypeptide chain elongation. Functionally, involved in peptide bond synthesis. Stimulates efficient translation and peptide-bond synthesis on native or reconstituted 70S ribosomes in vitro. Probably functions indirectly by altering the affinity of the ribosome for aminoacyl-tRNA, thus increasing their reactivity as acceptors for peptidyl transferase. The protein is Elongation factor P of Paraburkholderia phytofirmans (strain DSM 17436 / LMG 22146 / PsJN) (Burkholderia phytofirmans).